The primary structure comprises 175 residues: Clathrin-associated protein AP-3 complex component APS3 (175 aa).

Belongs to the adaptor complexes small subunit family. As to quaternary structure, adaptor protein complex 3 (AP-3) is a heterotetramer composed of 2 large adaptins, a medium adaptin and a small adaptin.

The protein localises to the golgi apparatus. It is found in the cytoplasmic vesicle membrane. Part of the AP-3 complex, an adapter-related complex which is not clathrin-associated. The complex is associated with the Golgi region as well as more peripheral structures. It facilitates the budding of vesicles from the Golgi membrane. Involved in vacuolar trafficking and contributes to hyphal growth and pathogenesis. This is Clathrin-associated protein AP-3 complex component APS3 (APS3) from Candida albicans (strain SC5314 / ATCC MYA-2876) (Yeast).